The primary structure comprises 729 residues: MLYKGDTLYLDWLEDGIAELVFDAPGSVNKLDTATVASLGQALEVLEKQHDLKGLLLRSNKAAFIVGADITEFLSLFLVPEEQLSQWLHFANSVFNRLEDLPVPTLAAVNGYALGGGCECVLATDYRLATPDLRIGLPETKLGIMPGFGGSVRLPRMLGADSALEIIAAGKDVGAEHALKIGLVDGVVKQEKLIEGAIAVLRQAITGDLDWRAKRQPKLEPLKLSKIEAAMSFTIAKGMVAQTAGKHYPAPMTAVKTIEAAARFGREEALNLENKSFVPLAHTNEARALVGIFLNDQYVKGKAKKLTKDIETPKQAAVLGAGIMGGGIAYQSAWKGVPVIMKDINDKSLNLGMTEAAKLLNKQLERGKIDGLKLAGVISTIHPTLDYAGFDRVDVVVEAVVENPKVKKAVLAETEQKVRPETVLASNTSTIPIGELASALERPENFCGMHFFNPVHRMPLVEIIRGEKSSDETIAKVVAWASKMGKTPIVVNDCPGFFVNRVLFPYFAGFSQLLRDGADFRKVDKVMEKQFGWPMGPAYLLDVVGIDTAHHAQAVMAAGFPQRMQKEYRDAIDALFDASRFGQKNGLGFWRYKEDSKGKPKKEEDAAVDDLLASVSQTKRDFSDDEIIARMMIPMINEVVRCLEEGIIASPAEADMALVYGLGFPPFHGGAFRWLDTQGSAKYLDMAQQYQHLGPLYEVPEGLRNKARHNEPYYPPVEPARPVGSLKTA.

Residues 1–189 (MLYKGDTLYL…KIGLVDGVVK (189 aa)) are enoyl-CoA hydratase/isomerase. Aspartate 296 lines the substrate pocket. Positions 311–729 (ETPKQAAVLG…ARPVGSLKTA (419 aa)) are 3-hydroxyacyl-CoA dehydrogenase. NAD(+) is bound by residues methionine 324, aspartate 343, 400–402 (VVE), lysine 407, and serine 429. Catalysis depends on histidine 450, which acts as the For 3-hydroxyacyl-CoA dehydrogenase activity. NAD(+) is bound at residue asparagine 453. Substrate is bound by residues asparagine 500 and tyrosine 660. A disordered region spans residues 708–729 (RHNEPYYPPVEPARPVGSLKTA).

This sequence in the N-terminal section; belongs to the enoyl-CoA hydratase/isomerase family. In the C-terminal section; belongs to the 3-hydroxyacyl-CoA dehydrogenase family. In terms of assembly, heterotetramer of two alpha chains (FadB) and two beta chains (FadA).

It catalyses the reaction a (3S)-3-hydroxyacyl-CoA + NAD(+) = a 3-oxoacyl-CoA + NADH + H(+). It carries out the reaction a (3S)-3-hydroxyacyl-CoA = a (2E)-enoyl-CoA + H2O. The enzyme catalyses a 4-saturated-(3S)-3-hydroxyacyl-CoA = a (3E)-enoyl-CoA + H2O. The catalysed reaction is (3S)-3-hydroxybutanoyl-CoA = (3R)-3-hydroxybutanoyl-CoA. It catalyses the reaction a (3Z)-enoyl-CoA = a 4-saturated (2E)-enoyl-CoA. It carries out the reaction a (3E)-enoyl-CoA = a 4-saturated (2E)-enoyl-CoA. It functions in the pathway lipid metabolism; fatty acid beta-oxidation. Involved in the aerobic and anaerobic degradation of long-chain fatty acids via beta-oxidation cycle. Catalyzes the formation of 3-oxoacyl-CoA from enoyl-CoA via L-3-hydroxyacyl-CoA. It can also use D-3-hydroxyacyl-CoA and cis-3-enoyl-CoA as substrate. The polypeptide is Fatty acid oxidation complex subunit alpha (Salmonella gallinarum (strain 287/91 / NCTC 13346)).